The chain runs to 101 residues: MAKKSMIQRELKREKLVAKYAQKRAELKAIILDINSTEEQVWEAQIKLQKLPVNSSASRVQRRCKVTGRPHAVYRKFGLCRNKLREYAMAGDVPGLKKASW.

It belongs to the universal ribosomal protein uS14 family. Part of the 30S ribosomal subunit. Contacts proteins S3 and S10.

In terms of biological role, binds 16S rRNA, required for the assembly of 30S particles and may also be responsible for determining the conformation of the 16S rRNA at the A site. This is Small ribosomal subunit protein uS14 from Francisella philomiragia subsp. philomiragia (strain ATCC 25017 / CCUG 19701 / FSC 153 / O#319-036).